Here is a 342-residue protein sequence, read N- to C-terminus: DNA primase small subunit PriS (342 aa).

Catalysis depends on residues aspartate 97, aspartate 99, and aspartate 276.

The protein belongs to the eukaryotic-type primase small subunit family. Heterodimer of a small subunit (PriS) and a large subunit (PriL). Mg(2+) is required as a cofactor. It depends on Mn(2+) as a cofactor.

Catalytic subunit of DNA primase, an RNA polymerase that catalyzes the synthesis of short RNA molecules used as primers for DNA polymerase during DNA replication. The small subunit contains the primase catalytic core and has DNA synthesis activity on its own. Binding to the large subunit stabilizes and modulates the activity, increasing the rate of DNA synthesis while decreasing the length of the DNA fragments, and conferring RNA synthesis capability. The DNA polymerase activity may enable DNA primase to also catalyze primer extension after primer synthesis. May also play a role in DNA repair. In Thermococcus sibiricus (strain DSM 12597 / MM 739), this protein is DNA primase small subunit PriS.